Here is a 448-residue protein sequence, read N- to C-terminus: uncharacterized protein (448 aa).

Residues 187 to 198 show a composition bias toward basic and acidic residues; that stretch reads SKGDRGDADDRG. Disordered regions lie at residues 187 to 221, 243 to 270, and 291 to 361; these read SKGD…LPTR, LQVP…GATM, and LSGL…LPNG. Over residues 243-261 the composition is skewed to low complexity; it reads LQVPGGTSAAIPSASSTPS. Residues 307-334 show a composition bias toward basic and acidic residues; sequence FDERGQEVRDPADYEHANEPDERRADDR.

It to M.tuberculosis Rv0025 and Rv0739.

This is an uncharacterized protein from Mycobacterium tuberculosis (strain CDC 1551 / Oshkosh).